Consider the following 277-residue polypeptide: UPF0496 protein At3g48650 (277 aa).

2 helical membrane passes run 124 to 144 (YIFFAAALLSVLALWIYLGAV) and 145 to 165 (SLVVAAKVVIEVATPSIAPLW).

This sequence belongs to the UPF0496 family.

It is found in the membrane. The sequence is that of UPF0496 protein At3g48650 from Arabidopsis thaliana (Mouse-ear cress).